Here is a 553-residue protein sequence, read N- to C-terminus: Arginine--tRNA ligase (553 aa).

Positions 130-140 (ANPTGDLHIGH) match the 'HIGH' region motif.

The protein belongs to the class-I aminoacyl-tRNA synthetase family. As to quaternary structure, monomer.

Its subcellular location is the cytoplasm. It catalyses the reaction tRNA(Arg) + L-arginine + ATP = L-arginyl-tRNA(Arg) + AMP + diphosphate. This is Arginine--tRNA ligase from Staphylococcus aureus (strain bovine RF122 / ET3-1).